A 62-amino-acid chain; its full sequence is Large ribosomal subunit protein bL28 (62 aa).

Belongs to the bacterial ribosomal protein bL28 family.

This is Large ribosomal subunit protein bL28 from Streptococcus equi subsp. equi (strain 4047).